Consider the following 332-residue polypeptide: Glycerol-3-phosphate dehydrogenase [NAD(P)+] (332 aa).

Residues serine 11, phenylalanine 12, lysine 32, and lysine 106 each contribute to the NADPH site. Sn-glycerol 3-phosphate contacts are provided by lysine 106, glycine 137, and serine 139. NADPH is bound at residue alanine 141. Positions 192, 245, 255, 256, and 257 each coordinate sn-glycerol 3-phosphate. Lysine 192 (proton acceptor) is an active-site residue. Position 256 (arginine 256) interacts with NADPH. The NADPH site is built by valine 280 and glutamate 282.

Belongs to the NAD-dependent glycerol-3-phosphate dehydrogenase family.

Its subcellular location is the cytoplasm. It carries out the reaction sn-glycerol 3-phosphate + NAD(+) = dihydroxyacetone phosphate + NADH + H(+). The catalysed reaction is sn-glycerol 3-phosphate + NADP(+) = dihydroxyacetone phosphate + NADPH + H(+). Its pathway is membrane lipid metabolism; glycerophospholipid metabolism. Catalyzes the reduction of the glycolytic intermediate dihydroxyacetone phosphate (DHAP) to sn-glycerol 3-phosphate (G3P), the key precursor for phospholipid synthesis. In Staphylococcus saprophyticus subsp. saprophyticus (strain ATCC 15305 / DSM 20229 / NCIMB 8711 / NCTC 7292 / S-41), this protein is Glycerol-3-phosphate dehydrogenase [NAD(P)+].